The following is a 367-amino-acid chain: Aminomethyltransferase (367 aa).

Belongs to the GcvT family. In terms of assembly, the glycine cleavage system is composed of four proteins: P, T, L and H.

The catalysed reaction is N(6)-[(R)-S(8)-aminomethyldihydrolipoyl]-L-lysyl-[protein] + (6S)-5,6,7,8-tetrahydrofolate = N(6)-[(R)-dihydrolipoyl]-L-lysyl-[protein] + (6R)-5,10-methylene-5,6,7,8-tetrahydrofolate + NH4(+). Its function is as follows. The glycine cleavage system catalyzes the degradation of glycine. In Mycolicibacterium paratuberculosis (strain ATCC BAA-968 / K-10) (Mycobacterium paratuberculosis), this protein is Aminomethyltransferase.